The chain runs to 66 residues: uncharacterized protein (66 aa).

Over residues 1 to 18 (MSTTSSSSTFSTRTASLS) the composition is skewed to low complexity. The interval 1-22 (MSTTSSSSTFSTRTASLSQSYT) is disordered.

This is an uncharacterized protein from Schizosaccharomyces pombe (strain 972 / ATCC 24843) (Fission yeast).